We begin with the raw amino-acid sequence, 198 residues long: Ribonuclease HII (198 aa).

One can recognise an RNase H type-2 domain in the interval 10-198 (HLVAGVDEVG…PVKRALGLVC (189 aa)). Residues D16, E17, and D108 each contribute to the a divalent metal cation site.

The protein belongs to the RNase HII family. It depends on Mn(2+) as a cofactor. Mg(2+) serves as cofactor.

The protein resides in the cytoplasm. It carries out the reaction Endonucleolytic cleavage to 5'-phosphomonoester.. Functionally, endonuclease that specifically degrades the RNA of RNA-DNA hybrids. In Enterobacter sp. (strain 638), this protein is Ribonuclease HII.